Consider the following 469-residue polypeptide: 3-isopropylmalate dehydratase large subunit (469 aa).

The [4Fe-4S] cluster site is built by Cys-347, Cys-407, and Cys-410.

It belongs to the aconitase/IPM isomerase family. LeuC type 1 subfamily. In terms of assembly, heterodimer of LeuC and LeuD. The cofactor is [4Fe-4S] cluster.

It catalyses the reaction (2R,3S)-3-isopropylmalate = (2S)-2-isopropylmalate. The protein operates within amino-acid biosynthesis; L-leucine biosynthesis; L-leucine from 3-methyl-2-oxobutanoate: step 2/4. Catalyzes the isomerization between 2-isopropylmalate and 3-isopropylmalate, via the formation of 2-isopropylmaleate. The polypeptide is 3-isopropylmalate dehydratase large subunit (Prochlorococcus marinus subsp. pastoris (strain CCMP1986 / NIES-2087 / MED4)).